The following is an 89-amino-acid chain: Small ribosomal subunit protein uS15 (89 aa).

The protein belongs to the universal ribosomal protein uS15 family. In terms of assembly, part of the 30S ribosomal subunit. Forms a bridge to the 50S subunit in the 70S ribosome, contacting the 23S rRNA.

Its function is as follows. One of the primary rRNA binding proteins, it binds directly to 16S rRNA where it helps nucleate assembly of the platform of the 30S subunit by binding and bridging several RNA helices of the 16S rRNA. Forms an intersubunit bridge (bridge B4) with the 23S rRNA of the 50S subunit in the ribosome. The chain is Small ribosomal subunit protein uS15 from Sinorhizobium medicae (strain WSM419) (Ensifer medicae).